Here is a 467-residue protein sequence, read N- to C-terminus: 3-isopropylmalate dehydratase large subunit (467 aa).

Residues cysteine 347, cysteine 407, and cysteine 410 each contribute to the [4Fe-4S] cluster site.

It belongs to the aconitase/IPM isomerase family. LeuC type 1 subfamily. Heterodimer of LeuC and LeuD. The cofactor is [4Fe-4S] cluster.

The enzyme catalyses (2R,3S)-3-isopropylmalate = (2S)-2-isopropylmalate. Its pathway is amino-acid biosynthesis; L-leucine biosynthesis; L-leucine from 3-methyl-2-oxobutanoate: step 2/4. Catalyzes the isomerization between 2-isopropylmalate and 3-isopropylmalate, via the formation of 2-isopropylmaleate. This is 3-isopropylmalate dehydratase large subunit from Nostoc sp. (strain PCC 7120 / SAG 25.82 / UTEX 2576).